Reading from the N-terminus, the 130-residue chain is MSATQYYGTGRRKTSTARVFLKAGSGNLVINNRSIDQYFGRETARMVVRQPLELVDATEKFDVYITVKGGGISGQAGAIRHGITRALMQYDETLRRTLRSAGFVTRDSREVERKKVGLRKARRRPQFSKR.

The interval 107–130 (DSREVERKKVGLRKARRRPQFSKR) is disordered. Positions 116–130 (VGLRKARRRPQFSKR) are enriched in basic residues.

The protein belongs to the universal ribosomal protein uS9 family.

This chain is Small ribosomal subunit protein uS9, found in Marinomonas sp. (strain MWYL1).